A 213-amino-acid polypeptide reads, in one-letter code: Orotate phosphoribosyltransferase (213 aa).

Lys26 is a binding site for 5-phospho-alpha-D-ribose 1-diphosphate. An orotate-binding site is contributed by 34–35; it reads FF. 5-phospho-alpha-D-ribose 1-diphosphate is bound by residues 72-73, Arg99, Lys100, Lys103, His105, and 124-132; these read YK and DDVITAGTA. 2 residues coordinate orotate: Thr128 and Arg156.

Belongs to the purine/pyrimidine phosphoribosyltransferase family. PyrE subfamily. As to quaternary structure, homodimer. Mg(2+) serves as cofactor.

It catalyses the reaction orotidine 5'-phosphate + diphosphate = orotate + 5-phospho-alpha-D-ribose 1-diphosphate. Its pathway is pyrimidine metabolism; UMP biosynthesis via de novo pathway; UMP from orotate: step 1/2. In terms of biological role, catalyzes the transfer of a ribosyl phosphate group from 5-phosphoribose 1-diphosphate to orotate, leading to the formation of orotidine monophosphate (OMP). The sequence is that of Orotate phosphoribosyltransferase from Vibrio atlanticus (strain LGP32) (Vibrio splendidus (strain Mel32)).